A 305-amino-acid polypeptide reads, in one-letter code: U6 small nuclear RNA (adenine-(43)-N(6))-methyltransferase (305 aa).

S-adenosyl-L-methionine-binding residues include Arg-87, Gly-112, Glu-135, Thr-166, and Asn-188. The interval 197–221 (PNPLGGNTRNPERRPAPNNARTGSQ) is disordered.

The protein belongs to the methyltransferase superfamily. METTL16/RlmF family.

It carries out the reaction adenosine in U6 snRNA + S-adenosyl-L-methionine = N(6)-methyladenosine in U6 snRNA + S-adenosyl-L-homocysteine + H(+). Its function is as follows. RNA N6-methyltransferase that mediates N6-methylation of adenine of U6 small nuclear RNA (U6 snRNA). The sequence is that of U6 small nuclear RNA (adenine-(43)-N(6))-methyltransferase from Drosophila melanogaster (Fruit fly).